The following is a 90-amino-acid chain: Small ribosomal subunit protein bS20 (90 aa).

The segment covering 1 to 15 (MANHKSAQKRIRQTK) has biased composition (basic residues). The disordered stretch occupies residues 1–22 (MANHKSAQKRIRQTKTRTERNR).

This sequence belongs to the bacterial ribosomal protein bS20 family.

Functionally, binds directly to 16S ribosomal RNA. In Helicobacter hepaticus (strain ATCC 51449 / 3B1), this protein is Small ribosomal subunit protein bS20.